Here is a 205-residue protein sequence, read N- to C-terminus: Large ribosomal subunit protein uL4 (205 aa).

A disordered region spans residues 56–76 (VSGTTAKPYRQKHTGRARQGS).

The protein belongs to the universal ribosomal protein uL4 family. As to quaternary structure, part of the 50S ribosomal subunit.

One of the primary rRNA binding proteins, this protein initially binds near the 5'-end of the 23S rRNA. It is important during the early stages of 50S assembly. It makes multiple contacts with different domains of the 23S rRNA in the assembled 50S subunit and ribosome. Its function is as follows. Forms part of the polypeptide exit tunnel. The sequence is that of Large ribosomal subunit protein uL4 from Ehrlichia ruminantium (strain Welgevonden).